The chain runs to 265 residues: Di-trans,poly-cis-undecaprenyl-diphosphate synthase (265 aa).

Residues 236–238 (RFG) carry the RXG motif; crucial for prenyltransferase activity motif.

The protein belongs to the UPP synthase family. Requires Mg(2+) as cofactor.

The enzyme catalyses 8 isopentenyl diphosphate + (2E,6E)-farnesyl diphosphate = di-trans,octa-cis-undecaprenyl diphosphate + 8 diphosphate. Its pathway is protein modification; protein glycosylation. It participates in lipid metabolism. In terms of biological role, cis-prenyl transferase involved in the synthesis of dolichol, a long-chain polyprenol that is utilized as a sugar carrier in protein glycosylation in the endoplasmic reticulum (ER). Catalyzes the sequential condensation of isopentenyl pyrophosphate (IPP) with farnesyl pyrophosphate (FPP) to produce a polyprenyl pyrophosphate which contains 11 (major) and 12 (minor) isoprene units. This chain is Di-trans,poly-cis-undecaprenyl-diphosphate synthase, found in Giardia intestinalis (strain ATCC 50803 / WB clone C6) (Giardia lamblia).